The chain runs to 546 residues: Chaperonin GroEL 1 (546 aa).

ATP is bound by residues 30–33, lysine 51, 87–91, glycine 415, 479–481, and aspartate 495; these read TLGP, DGTTT, and NAA.

The protein belongs to the chaperonin (HSP60) family. Forms a cylinder of 14 subunits composed of two heptameric rings stacked back-to-back. Interacts with the co-chaperonin GroES.

The protein resides in the cytoplasm. It catalyses the reaction ATP + H2O + a folded polypeptide = ADP + phosphate + an unfolded polypeptide.. Together with its co-chaperonin GroES, plays an essential role in assisting protein folding. The GroEL-GroES system forms a nano-cage that allows encapsulation of the non-native substrate proteins and provides a physical environment optimized to promote and accelerate protein folding. The polypeptide is Chaperonin GroEL 1 (Vibrio vulnificus (strain CMCP6)).